The sequence spans 379 residues: MYFSEQNKMIRKLARDFAEKELTTEILDEVEESGEFPQEILDKMAKFGFFGIKIPKSLGGSGGDHMSYVICMEEFARVSGVASVYLSSPNSLAGGPLLLSGTEEQIEKYLKPIITGKKKLAFALTEPGAGSDAGGMSTTAVDMGDYYLLNGRKTFITMAPLCDDAVIYAKTDMSKGTRGISAFIVDLKSEGVSMGKNEHKMGLIGCATSDIIMEDVKVPKENRLGEVNKGFSNAMKTLDVGRLGVASQSIGVAQGALDEAIKYAKERKQFGKRIADFQAIAFMIADMATKLEAAKLLVYNAASLMDNKKNATKEASMAKFYASEICNEICAKAVQIHGGYGYIKEYKVERMYRDCRVFTIYEGTSQVQQMVISGMLLKK.

FAD is bound by residues 122-131 (FALTEPGAGS) and 155-157 (FIT). Ser-131 is a binding site for substrate. 239 to 242 (DVGR) contacts substrate. FAD-binding positions include Arg-267, Gln-278, and 335 to 339 (QIHGG). Glu-362 (proton acceptor) is an active-site residue. Gly-363 lines the substrate pocket. 364–366 (TSQ) serves as a coordination point for FAD.

It belongs to the acyl-CoA dehydrogenase family. Part of the homotrimeric caffeyl-CoA reductase-Etf complex composed of (R)-2-hydroxyisocaproyl-CoA dehydratase CarC, and the electron transfer flavoprotein (ETF) alpha (CarE) and beta (CarD) subunits. The cofactor is FAD.

Its subcellular location is the cytoplasm. The catalysed reaction is hydrocaffeoyl-CoA + 2 reduced [2Fe-2S]-[ferredoxin] + 2 NAD(+) = (E)-caffeoyl-CoA + 2 oxidized [2Fe-2S]-[ferredoxin] + 2 NADH. The Caffeyl-CoA reductase-Etf complex catalyzes the reduction of caffeyl-CoA to yield hydrocaffeyl-CoA. It couples the endergonic ferredoxin reduction with NADH as reductant to the exergonic reduction of caffeoyl-CoA with the same reductant. It uses the mechanism of electron bifurcation to overcome the steep energy barrier in ferredoxin reduction. Also reduces 4-coumaroyl-CoA and feruloyl-CoA. This chain is Caffeyl-CoA reductase-Etf complex subunit CarC, found in Acetobacterium woodii (strain ATCC 29683 / DSM 1030 / JCM 2381 / KCTC 1655 / WB1).